Consider the following 238-residue polypeptide: Probable xyloglucan-specific endo-beta-1,4-glucanase A (238 aa).

The N-terminal stretch at 1–18 is a signal peptide; it reads MKFSLSVALSLAAATAQA. Residues asparagine 106 and asparagine 171 are each glycosylated (N-linked (GlcNAc...) asparagine).

This sequence belongs to the glycosyl hydrolase 12 (cellulase H) family.

Its subcellular location is the secreted. It carries out the reaction xyloglucan + H2O = xyloglucan oligosaccharides.. Functionally, catalyzes endohydrolysis of 1,4-beta-D-glucosidic linkages in xyloglucan with retention of the beta-configuration of the glycosyl residues. Specific for xyloglucan and does not hydrolyze other cell wall components. This is Probable xyloglucan-specific endo-beta-1,4-glucanase A (xgeA) from Neosartorya fischeri (strain ATCC 1020 / DSM 3700 / CBS 544.65 / FGSC A1164 / JCM 1740 / NRRL 181 / WB 181) (Aspergillus fischerianus).